Reading from the N-terminus, the 479-residue chain is Glycogen synthase (479 aa).

Residue Lys-15 participates in ADP-alpha-D-glucose binding.

The protein belongs to the glycosyltransferase 1 family. Bacterial/plant glycogen synthase subfamily.

It catalyses the reaction [(1-&gt;4)-alpha-D-glucosyl](n) + ADP-alpha-D-glucose = [(1-&gt;4)-alpha-D-glucosyl](n+1) + ADP + H(+). The protein operates within glycan biosynthesis; glycogen biosynthesis. Functionally, synthesizes alpha-1,4-glucan chains using ADP-glucose. The sequence is that of Glycogen synthase from Pectobacterium atrosepticum (strain SCRI 1043 / ATCC BAA-672) (Erwinia carotovora subsp. atroseptica).